The chain runs to 717 residues: MLNQRKSVEQLNEAEAAEELAFLAAELARHDMLYHGKDAPEISDADYDALKRRNDLIEERFPVLVREDSPSRKVGAAPSLTFAPVVHARPMLSLDNTFSDEDARAFVAGVYRFLGKLPDGSIAFTAEPKIDGLSMSLRYENRRLVTAATRGDGTTGENVTANVRTIGMIPQTLPADAPDVVEIRGEIYMAKSDFAALNAEMAAQGRPLYVNPRNTASGSLRQLDAKVTANRKLRFFAYAWGEMSAMPADTQLGMVETFKAWGFPVNPLMQRFFSADELLEHYHHIERERPDLDYDIDGVVYKVDRLDLQARLGFRSRSPRWATAHKFPAEQAFTRLKGIDIQVGRTGALTPVARLEPITVGGVVVTNATLHNEDYIRGVGNTGEPIRDGRDVRIGDMVIVQRAGDVIPQIVDVVMDERPEGAEPYRFPTTCPICGSHAVRDINEKTGKVDAVRRCTGGFVCRAQAVEHLKHFVSRNAFDIEGLGSKQIEFFFESEDENLRIRTAPEIFTLERRQEASLNKLENTDGFGKVSVRKLYEAINARRSIALHRLIYALGIRHVGETTAKLLARSYGSYEHFGAAMTEAAGFSGDAWNELNSIDGIGEVVARAIVEFYKEPRNLKVVSELLQEVTPESAELPVATDSPVAGKTVVFTGSLEKMTREEAKAKAESLGAKVAGSVSKKTDIVVAGPGAGSKLDKARELGVQTMDEDEWLALIGG.

NAD(+) contacts are provided by residues 44–48 (DADYD), 93–94 (SL), and Glu127. Catalysis depends on Lys129, which acts as the N6-AMP-lysine intermediate. NAD(+) contacts are provided by Arg150, Glu186, Lys302, and Lys326. Cys431, Cys434, Cys455, and Cys461 together coordinate Zn(2+). The 79-residue stretch at 639-717 (ATDSPVAGKT…EDEWLALIGG (79 aa)) folds into the BRCT domain.

The protein belongs to the NAD-dependent DNA ligase family. LigA subfamily. Mg(2+) is required as a cofactor. It depends on Mn(2+) as a cofactor.

The catalysed reaction is NAD(+) + (deoxyribonucleotide)n-3'-hydroxyl + 5'-phospho-(deoxyribonucleotide)m = (deoxyribonucleotide)n+m + AMP + beta-nicotinamide D-nucleotide.. DNA ligase that catalyzes the formation of phosphodiester linkages between 5'-phosphoryl and 3'-hydroxyl groups in double-stranded DNA using NAD as a coenzyme and as the energy source for the reaction. It is essential for DNA replication and repair of damaged DNA. The chain is DNA ligase from Rhizobium meliloti (strain 1021) (Ensifer meliloti).